The following is a 347-amino-acid chain: MDSFVSTYLWPALIMIGQSLLLLVCLLVFIAYILLADRKIWAAVQLRRGPNVVGPFGLFQSFADLLKFMVKEPIIPAGANKAVFLLAPLVSVVLALSTWAVVPVANGWVIANINVGILYILAISSLEVYGIIMGGWASNSKYPFLGALRSAAQMVSYEVSIGLVIVTVLLCVGSLNLTDIVMSQQTGLGTKLGLPASFLDWHWLSLFPMFIVFFISALAETNRPPFDLPEAESELVAGFMVEYGSAPYMMFMLGEYAAVVLMCSLTTILFLGGWLPPVDIWILSWVPGIIWFMLKACFVFFMFAMVKAFVPRYRYDQLMRLGWKVFLPLSLAMVVIVAFVLKLTGWA.

The next 8 membrane-spanning stretches (helical) occupy residues 13–33 (LIMI…IAYI), 82–102 (AVFL…WAVV), 115–135 (VGIL…IMGG), 161–181 (IGLV…TDIV), 198–218 (FLDW…ISAL), 258–278 (AVVL…LPPV), 286–306 (VPGI…FAMV), and 321–341 (LGWK…AFVL).

Belongs to the complex I subunit 1 family. NDH-1 is composed of 14 different subunits. Subunits NuoA, H, J, K, L, M, N constitute the membrane sector of the complex.

It localises to the cell inner membrane. It carries out the reaction a quinone + NADH + 5 H(+)(in) = a quinol + NAD(+) + 4 H(+)(out). Its function is as follows. NDH-1 shuttles electrons from NADH, via FMN and iron-sulfur (Fe-S) centers, to quinones in the respiratory chain. The immediate electron acceptor for the enzyme in this species is believed to be ubiquinone. Couples the redox reaction to proton translocation (for every two electrons transferred, four hydrogen ions are translocated across the cytoplasmic membrane), and thus conserves the redox energy in a proton gradient. This subunit may bind ubiquinone. This is NADH-quinone oxidoreductase subunit H from Rhizobium rhizogenes (strain K84 / ATCC BAA-868) (Agrobacterium radiobacter).